The chain runs to 322 residues: Undecaprenyl-phosphate 4-deoxy-4-formamido-L-arabinose transferase (322 aa).

Residues 1-235 (MFEIHPVKKV…TCLTTTPLRM (235 aa)) are Cytoplasmic-facing. The chain crosses the membrane as a helical span at residues 236–256 (LSLLGSIIAIGGFSIAVLLVI). Residues 257–269 (LRLTFGPQWAAEG) are Periplasmic-facing. A helical membrane pass occupies residues 270-290 (VFMLFAVLFTFIGAQFIGMGL). The Cytoplasmic segment spans residues 291-322 (LGEYIGRIYTDVRARPRYFVQQVIRPSSKENE).

Belongs to the glycosyltransferase 2 family.

Its subcellular location is the cell inner membrane. It catalyses the reaction UDP-4-deoxy-4-formamido-beta-L-arabinose + di-trans,octa-cis-undecaprenyl phosphate = 4-deoxy-4-formamido-alpha-L-arabinopyranosyl di-trans,octa-cis-undecaprenyl phosphate + UDP. The protein operates within glycolipid biosynthesis; 4-amino-4-deoxy-alpha-L-arabinose undecaprenyl phosphate biosynthesis; 4-amino-4-deoxy-alpha-L-arabinose undecaprenyl phosphate from UDP-4-deoxy-4-formamido-beta-L-arabinose and undecaprenyl phosphate: step 1/2. It functions in the pathway bacterial outer membrane biogenesis; lipopolysaccharide biosynthesis. Catalyzes the transfer of 4-deoxy-4-formamido-L-arabinose from UDP to undecaprenyl phosphate. The modified arabinose is attached to lipid A and is required for resistance to polymyxin and cationic antimicrobial peptides. The sequence is that of Undecaprenyl-phosphate 4-deoxy-4-formamido-L-arabinose transferase from Escherichia coli (strain SMS-3-5 / SECEC).